We begin with the raw amino-acid sequence, 451 residues long: Probable gamma-glutamyl phosphate reductase (451 aa).

It belongs to the gamma-glutamyl phosphate reductase family.

The enzyme catalyses L-glutamate 5-semialdehyde + phosphate + NADP(+) = L-glutamyl 5-phosphate + NADPH + H(+). Its pathway is amino-acid biosynthesis; L-proline biosynthesis; L-glutamate 5-semialdehyde from L-glutamate: step 2/2. Its function is as follows. Catalyzes the NADPH dependent reduction of L-gamma-glutamyl 5-phosphate into L-glutamate 5-semialdehyde and phosphate. The product spontaneously undergoes cyclization to form 1-pyrroline-5-carboxylate. The polypeptide is Probable gamma-glutamyl phosphate reductase (pro1) (Schizosaccharomyces pombe (strain 972 / ATCC 24843) (Fission yeast)).